A 160-amino-acid chain; its full sequence is Transcription elongation factor GreA (160 aa).

Residues 2 to 30 (SEKTYPMTLAEKEQLEQELEELKLVRRPE) adopt a coiled-coil conformation.

This sequence belongs to the GreA/GreB family.

Its function is as follows. Necessary for efficient RNA polymerase transcription elongation past template-encoded arresting sites. The arresting sites in DNA have the property of trapping a certain fraction of elongating RNA polymerases that pass through, resulting in locked ternary complexes. Cleavage of the nascent transcript by cleavage factors such as GreA or GreB allows the resumption of elongation from the new 3'terminus. GreA releases sequences of 2 to 3 nucleotides. The protein is Transcription elongation factor GreA of Streptococcus mutans serotype c (strain ATCC 700610 / UA159).